Reading from the N-terminus, the 408-residue chain is Histidine--tRNA ligase (408 aa).

It belongs to the class-II aminoacyl-tRNA synthetase family. In terms of assembly, homodimer.

It is found in the cytoplasm. The catalysed reaction is tRNA(His) + L-histidine + ATP = L-histidyl-tRNA(His) + AMP + diphosphate + H(+). In Campylobacter jejuni subsp. jejuni serotype O:2 (strain ATCC 700819 / NCTC 11168), this protein is Histidine--tRNA ligase.